Reading from the N-terminus, the 136-residue chain is uncharacterized protein (136 aa).

A disordered region spans residues 1 to 51 (MAANATSGRPPSIALRQPEATGWRRGIPAKVATKGTQAEREGDVRSGGRAR). Residues 37–46 (QAEREGDVRS) show a composition bias toward basic and acidic residues.

This is an uncharacterized protein from Homo sapiens (Human).